A 732-amino-acid polypeptide reads, in one-letter code: Catalase-peroxidase (732 aa).

The disordered stretch occupies residues 1–24 (MDAKTDDNSAGKCPVAHGSAGRTN). Positions 96-219 (WHSAGTYRIA…LGAVQMGLIY (124 aa)) form a cross-link, tryptophyl-tyrosyl-methioninium (Trp-Tyr) (with M-245). His-97 serves as the catalytic Proton acceptor. A cross-link (tryptophyl-tyrosyl-methioninium (Tyr-Met) (with W-96)) is located at residues 219–245 (YVNPEGPNGNPDPLAAARDIRDTFARM). His-260 is a binding site for heme b.

The protein belongs to the peroxidase family. Peroxidase/catalase subfamily. As to quaternary structure, homodimer or homotetramer. It depends on heme b as a cofactor. In terms of processing, formation of the three residue Trp-Tyr-Met cross-link is important for the catalase, but not the peroxidase activity of the enzyme.

It carries out the reaction H2O2 + AH2 = A + 2 H2O. It catalyses the reaction 2 H2O2 = O2 + 2 H2O. Its function is as follows. Bifunctional enzyme with both catalase and broad-spectrum peroxidase activity. This chain is Catalase-peroxidase, found in Mesorhizobium japonicum (strain LMG 29417 / CECT 9101 / MAFF 303099) (Mesorhizobium loti (strain MAFF 303099)).